The following is a 249-amino-acid chain: Ribosomal RNA small subunit methyltransferase G (249 aa).

G86, F91, and R178 together coordinate S-adenosyl-L-methionine.

Belongs to the methyltransferase superfamily. RNA methyltransferase RsmG family.

The protein localises to the cytoplasm. In terms of biological role, specifically methylates the N7 position of a guanine in 16S rRNA. This Bifidobacterium adolescentis (strain ATCC 15703 / DSM 20083 / NCTC 11814 / E194a) protein is Ribosomal RNA small subunit methyltransferase G.